Consider the following 587-residue polypeptide: Cryptochrome-1 (587 aa).

Residues 3-132 (VNAVHWFRKG…EVIVRISHTL (130 aa)) enclose the Photolyase/cryptochrome alpha/beta domain. Residue K11 forms a Glycyl lysine isopeptide (Lys-Gly) (interchain with G-Cter in ubiquitin) linkage. An LIR 1 motif is present at residues 50–54 (NRWRF). Phosphoserine; by AMPK is present on S71. The short motif at 82-87 (DVFPRL) is the LIR 2 element. K107 participates in a covalent cross-link: Glycyl lysine isopeptide (Lys-Gly) (interchain with G-Cter in ubiquitin). Residues 151-156 (KRFQTL) carry the LIR 3 motif. Residue K159 forms a Glycyl lysine isopeptide (Lys-Gly) (interchain with G-Cter in ubiquitin) linkage. Position 247 is a phosphoserine; by MAPK (S247). Residue S252 coordinates FAD. 2 consecutive short sequence motifs (LIR) follow at residues 255–260 (LRFGCL) and 271–276 (DLYKKV). S280 is subject to Phosphoserine; by AMPK. Residues 285–290 (SLYGQL) carry the LIR 6 motif. Q289 serves as a coordination point for FAD. K329 participates in a covalent cross-link: Glycyl lysine isopeptide (Lys-Gly) (interchain with G-Cter in ubiquitin). The short motif at 335 to 339 (TGFPW) is the LIR 7 element. H355 is a binding site for FAD. A required for inhibition of CLOCK-BMAL1-mediated transcription region spans residues 371 to 470 (WISWEEGMKV…LIGVNYPKPM (100 aa)). The LIR 8 motif lies at 379–384 (KVFEEL). Residue 387 to 389 (DAD) participates in FAD binding. Short sequence motifs (LIR) lie at residues 395 to 400 (GSWMWL), 411 to 416 (HCYCPV), and 430 to 435 (RRYLPV). The interval 471–493 (VNHAEASRLNIERMKQIYQQLSR) is interaction with TIMELESS. K485 participates in a covalent cross-link: Glycyl lysine isopeptide (Lys-Gly) (interchain with G-Cter in ubiquitin). 2 short sequence motifs (LIR) span residues 486–491 (QIYQQL) and 492–497 (SRYRGL). Residues 554 to 587 (GSSSMGHGLSNGKRPSQEEDTQSIGPKVQRQSTN) are disordered. S569 carries the post-translational modification Phosphoserine.

It belongs to the DNA photolyase class-1 family. Component of the circadian core oscillator, which includes the CRY proteins, CLOCK or NPAS2, BMAL1 or BMAL2, CSNK1D and/or CSNK1E, TIMELESS, and the PER proteins. Interacts directly with TIMELESS. Interacts directly with PER1, PER2 and PER3; interaction with PER2 inhibits its ubiquitination and vice versa. Interacts with FBXL21. Interacts with FBXL3. Interacts with CLOCK-BMAL1 independently of PER2 and DNA. Interacts with HDAC1, HDAC2 and SIN3B. Interacts with nuclear receptors AR, NR1D1, NR3C1/GR, RORA and RORC; the interaction with at least NR3C1/GR is ligand dependent. Interacts with PRKDC. Interacts with the G protein subunit alpha GNAS; the interaction may block GPCR-mediated regulation of cAMP concentrations. Interacts with PRMT5. Interacts with EZH2. Interacts with MYBBP1A, DOCK7, HNRNPU, RPL7A, RPL8 and RPS3. Interacts with PPP5C (via TPR repeats). Interacts with MAP1LC3B. Interacts with CLOCK. Interacts with BMAL1. Interacts weakly with HDAC3; this interaction is enhanced in the presence of FBXL3. Interacts with TRIM28, KCTD5 and DDB1 Interacts with HNF4A. Interacts with PSMD2 in a KDM8-dependent manner. Interacts with KDM8 in a FBXL3-dependent manner. Interacts with PPARG in a ligand-dependent manner. Interacts with PPARD (via domain NR LBD) and NR1I2 (via domain NR LBD) in a ligand-dependent manner. Interacts with PPARA, NR1I3 and VDR. FAD is required as a cofactor. The cofactor is (6R)-5,10-methylene-5,6,7,8-tetrahydrofolate. In terms of processing, phosphorylation on Ser-247 by MAPK is important for the inhibition of CLOCK-BMAL1-mediated transcriptional activity. Phosphorylation by CSNK1E requires interaction with PER1 or PER2. Phosphorylation at Ser-71 and Ser-280 by AMPK decreases protein stability. Phosphorylation at Ser-569 exhibits a robust circadian rhythm with a peak at CT8, increases protein stability, prevents SCF(FBXL3)-mediated degradation and is antagonized by interaction with PRKDC. Ubiquitinated by the SCF(FBXL3) and SCF(FBXL21) complexes, regulating the balance between degradation and stabilization. The SCF(FBXL3) complex is mainly nuclear and mediates ubiquitination and subsequent degradation of CRY1. In contrast, cytoplasmic SCF(FBXL21) complex-mediated ubiquitination leads to stabilize CRY1 and counteract the activity of the SCF(FBXL3) complex. The SCF(FBXL3) and SCF(FBXL21) complexes probably mediate ubiquitination at different Lys residues. Ubiquitination at Lys-11 and Lys-107 are specifically ubiquitinated by the SCF(FBXL21) complex but not by the SCF(FBXL3) complex. Ubiquitination may be inhibited by PER2. Deubiquitinated by USP7. Post-translationally, undergoes autophagy-mediated degradation in the liver in a time-dependent manner. Autophagic degradation of CRY1 (an inhibitor of gluconeogenesis) occurs during periods of reduced feeding allowing induction of gluconeogenesis and maintenance of blood glucose levels. In terms of tissue distribution, expressed in all tissues tested including spleen, liver, skeletal muscle, kidney, brain, intestine, eye, harderian gland, liver and heart. Highest levels in the eye, brain, kidney and harderian gland. In the brain, especially located to the suprachiasma nucleus (SCN).

The protein localises to the cytoplasm. Its subcellular location is the nucleus. Its function is as follows. Transcriptional repressor which forms a core component of the circadian clock. The circadian clock, an internal time-keeping system, regulates various physiological processes through the generation of approximately 24 hour circadian rhythms in gene expression, which are translated into rhythms in metabolism and behavior. It is derived from the Latin roots 'circa' (about) and 'diem' (day) and acts as an important regulator of a wide array of physiological functions including metabolism, sleep, body temperature, blood pressure, endocrine, immune, cardiovascular, and renal function. Consists of two major components: the central clock, residing in the suprachiasmatic nucleus (SCN) of the brain, and the peripheral clocks that are present in nearly every tissue and organ system. Both the central and peripheral clocks can be reset by environmental cues, also known as Zeitgebers (German for 'timegivers'). The predominant Zeitgeber for the central clock is light, which is sensed by retina and signals directly to the SCN. The central clock entrains the peripheral clocks through neuronal and hormonal signals, body temperature and feeding-related cues, aligning all clocks with the external light/dark cycle. Circadian rhythms allow an organism to achieve temporal homeostasis with its environment at the molecular level by regulating gene expression to create a peak of protein expression once every 24 hours to control when a particular physiological process is most active with respect to the solar day. Transcription and translation of core clock components (CLOCK, NPAS2, BMAL1, BMAL2, PER1, PER2, PER3, CRY1 and CRY2) plays a critical role in rhythm generation, whereas delays imposed by post-translational modifications (PTMs) are important for determining the period (tau) of the rhythms (tau refers to the period of a rhythm and is the length, in time, of one complete cycle). A diurnal rhythm is synchronized with the day/night cycle, while the ultradian and infradian rhythms have a period shorter and longer than 24 hours, respectively. Disruptions in the circadian rhythms contribute to the pathology of cardiovascular diseases, cancer, metabolic syndromes and aging. A transcription/translation feedback loop (TTFL) forms the core of the molecular circadian clock mechanism. Transcription factors, CLOCK or NPAS2 and BMAL1 or BMAL2, form the positive limb of the feedback loop, act in the form of a heterodimer and activate the transcription of core clock genes and clock-controlled genes (involved in key metabolic processes), harboring E-box elements (5'-CACGTG-3') within their promoters. The core clock genes: PER1/2/3 and CRY1/2 which are transcriptional repressors form the negative limb of the feedback loop and interact with the CLOCK|NPAS2-BMAL1|BMAL2 heterodimer inhibiting its activity and thereby negatively regulating their own expression. This heterodimer also activates nuclear receptors NR1D1/2 and RORA/B/G, which form a second feedback loop and which activate and repress BMAL1 transcription, respectively. CRY1 and CRY2 have redundant functions but also differential and selective contributions at least in defining the pace of the SCN circadian clock and its circadian transcriptional outputs. More potent transcriptional repressor in cerebellum and liver than CRY2, though more effective in lengthening the period of the SCN oscillator. On its side, CRY2 seems to play a critical role in tuning SCN circadian period by opposing the action of CRY1. With CRY2, is dispensable for circadian rhythm generation but necessary for the development of intercellular networks for rhythm synchrony. Capable of translocating circadian clock core proteins such as PER proteins to the nucleus. Interacts with CLOCK-BMAL1 independently of PER proteins and is found at CLOCK-BMAL1-bound sites, suggesting that CRY may act as a molecular gatekeeper to maintain CLOCK-BMAL1 in a poised and repressed state until the proper time for transcriptional activation. Represses the CLOCK-BMAL1 induced transcription of BHLHE40/DEC1, ATF4, MTA1, KLF10 and NAMPT. May repress circadian target genes expression in collaboration with HDAC1 and HDAC2 through histone deacetylation. Mediates the clock-control activation of ATR and modulates ATR-mediated DNA damage checkpoint. In liver, mediates circadian regulation of cAMP signaling and gluconeogenesis by binding to membrane-coupled G proteins and blocking glucagon-mediated increases in intracellular cAMP concentrations and CREB1 phosphorylation. Inhibits hepatic gluconeogenesis by decreasing nuclear FOXO1 levels that down-regulates gluconeogenic gene expression. Besides its role in the maintenance of the circadian clock, is also involved in the regulation of other processes. Represses glucocorticoid receptor NR3C1/GR-induced transcriptional activity by binding to glucocorticoid response elements (GREs). Plays a key role in glucose and lipid metabolism modulation, in part, through the transcriptional regulation of genes involved in these pathways, such as LEP or ACSL4. Represses PPARD and its target genes in the skeletal muscle and limits exercise capacity. Plays an essential role in the generation of circadian rhythms in the retina. Represses the transcriptional activity of NR1I2. The chain is Cryptochrome-1 (CRY1) from Spalax judaei (Judean Mountains blind mole rat).